The primary structure comprises 648 residues: PAN2-PAN3 deadenylation complex subunit PAN3 (648 aa).

The segment at 1 to 24 (MAATRYPPNDLRRQVGSPRSKGRE) is disordered. The C3H1-type zinc-finger motif lies at 24-53 (ENKDTLCRNILIYGNCRYEDQGCTFNHDQN). The interval 244–506 (QVMPNSGLPQ…SIENFISGIA (263 aa)) is pseudokinase domain. ATP is bound by residues arginine 295, 345–352 (DYHPLSKT), and 404–405 (SK). Positions 507-545 (THMTAFFDLALQDGDEKQFHLARELENGRIARSMMKLMT) form a coiled coil. Positions 546–648 (IIERAEPGGA…SKTGAPGANN (103 aa)) are knob domain.

Belongs to the protein kinase superfamily. PAN3 family. As to quaternary structure, homodimer. Forms a heterotrimer with a catalytic subunit PAN2 to form the poly(A)-nuclease (PAN) deadenylation complex. Interacts (via PAM-2 motif) with poly(A)-binding protein PAB1 (via PABC domain), conferring substrate specificity of the enzyme complex.

It is found in the cytoplasm. Functionally, regulatory subunit of the poly(A)-nuclease (PAN) deadenylation complex, one of two cytoplasmic mRNA deadenylases involved in mRNA turnover. PAN specifically shortens poly(A) tails of RNA and the activity is stimulated by poly(A)-binding protein PAB1. PAN deadenylation is followed by rapid degradation of the shortened mRNA tails by the CCR4-NOT complex. Deadenylated mRNAs are then degraded by two alternative mechanisms, namely exosome-mediated 3'-5' exonucleolytic degradation, or deadenylation-dependent mRNA decaping and subsequent 5'-3' exonucleolytic degradation by XRN1. May also be involved in post-transcriptional maturation of mRNA poly(A) tails. PAN3 acts as a positive regulator for PAN activity, recruiting the catalytic subunit PAN2 to mRNA via its interaction with RNA and with PAB1. This chain is PAN2-PAN3 deadenylation complex subunit PAN3, found in Chaetomium globosum (strain ATCC 6205 / CBS 148.51 / DSM 1962 / NBRC 6347 / NRRL 1970) (Soil fungus).